The chain runs to 295 residues: Acetyl-coenzyme A carboxylase carboxyl transferase subunit beta (295 aa).

The interval Met1–Lys20 is disordered. In terms of domain architecture, CoA carboxyltransferase N-terminal spans Leu28–Ala295. Cys32, Cys35, Cys51, and Cys54 together coordinate Zn(2+). The segment at Cys32–Cys54 adopts a C4-type zinc-finger fold.

Belongs to the AccD/PCCB family. As to quaternary structure, acetyl-CoA carboxylase is a heterohexamer composed of biotin carboxyl carrier protein (AccB), biotin carboxylase (AccC) and two subunits each of ACCase subunit alpha (AccA) and ACCase subunit beta (AccD). The cofactor is Zn(2+).

It localises to the cytoplasm. It carries out the reaction N(6)-carboxybiotinyl-L-lysyl-[protein] + acetyl-CoA = N(6)-biotinyl-L-lysyl-[protein] + malonyl-CoA. It participates in lipid metabolism; malonyl-CoA biosynthesis; malonyl-CoA from acetyl-CoA: step 1/1. Functionally, component of the acetyl coenzyme A carboxylase (ACC) complex. Biotin carboxylase (BC) catalyzes the carboxylation of biotin on its carrier protein (BCCP) and then the CO(2) group is transferred by the transcarboxylase to acetyl-CoA to form malonyl-CoA. The protein is Acetyl-coenzyme A carboxylase carboxyl transferase subunit beta of Xanthomonas oryzae pv. oryzae (strain MAFF 311018).